The sequence spans 463 residues: Hexose-6-phosphate:phosphate antiporter (463 aa).

Residues 1 to 24 (MLAFLNQVRKPTLDLPLDVRRKMW) are Cytoplasmic-facing. A helical transmembrane segment spans residues 25–45 (FKPFMQSYLVVFIGYLTMYLI). Topologically, residues 46–60 (RKNFNIAQNDMISTY) are periplasmic. Residues 61–81 (GLSMTELGMIGLGFSITYGVG) form a helical membrane-spanning segment. Topologically, residues 82 to 96 (KTLVSYYADGKNTKQ) are cytoplasmic. The chain crosses the membrane as a helical span at residues 97–117 (FLPFMLILSAICMLGFSASMG). The Periplasmic portion of the chain corresponds to 118–122 (AGSTS). The chain crosses the membrane as a helical span at residues 123 to 143 (LFLMIAFYALSGFFQSTGGSC). Topologically, residues 144 to 159 (SYSTITKWTPRRKRGT) are cytoplasmic. The helical transmembrane segment at 160–180 (FLGFWNISHNLGGAGAAGVAL) threads the bilayer. At 181 to 189 (FGANYLFDG) the chain is on the periplasmic side. The chain crosses the membrane as a helical span at residues 190 to 210 (HVIGMFIFPSIIALIVGFIGL). Over 211-259 (RFGSDSPESYGLGKAEELFGEEISEEDKETEENEMTKWQIFVEYVLKNK) the chain is Cytoplasmic. A helical membrane pass occupies residues 260–280 (VIWLLCFSNIFLYVVRIGIDQ). Residues 281–297 (WSTVYAFQELKLSKEVA) are Periplasmic-facing. The helical transmembrane segment at 298 to 318 (IQGFTLFEVGALVGTLLWGWL) threads the bilayer. Over 319-326 (SDLANGRR) the chain is Cytoplasmic. The helical transmembrane segment at 327–347 (ALVACVALALIIATLGVYQHA) threads the bilayer. Over 348–357 (SNQYVYLASL) the chain is Periplasmic. The helical transmembrane segment at 358 to 378 (FALGFLVFGPQLLIGVAAVGF) threads the bilayer. Residues 379-382 (VPKK) are Cytoplasmic-facing. Residues 383 to 403 (AIGAADGIKGTFAYLIGDSFA) traverse the membrane as a helical segment. Residues 404 to 425 (KLGLGMIADGTPVFGLTGWAGT) are Periplasmic-facing. Residues 426–446 (FAALDAAAIGCICLMAMVAVM) form a helical membrane-spanning segment. The Cytoplasmic segment spans residues 447 to 463 (EERKIRREKKIQQVNIA).

This sequence belongs to the major facilitator superfamily. Organophosphate:Pi antiporter (OPA) (TC 2.A.1.4) family.

The protein resides in the cell inner membrane. Functionally, mediates the exchange of external hexose 6-phosphate and internal inorganic phosphate. The protein is Hexose-6-phosphate:phosphate antiporter (uhpT) of Salmonella typhimurium (strain LT2 / SGSC1412 / ATCC 700720).